A 467-amino-acid chain; its full sequence is Abscisic acid 8'-hydroxylase 1 (467 aa).

A helical transmembrane segment spans residues 5–24; sequence ALFLTLFAGSLFLYFLRCLI. A heme-binding site is contributed by C411.

The protein belongs to the cytochrome P450 family. Requires heme as cofactor. As to expression, mainly expressed in flowers, siliques, roots and stems. Lower expression in rosette leaves and dry seeds. Expressed in vascular tissues of embryo during the seed development.

It localises to the membrane. The catalysed reaction is 2-cis-(+)-abscisate + reduced [NADPH--hemoprotein reductase] + O2 = (+)-8'-hydroxyabscisate + oxidized [NADPH--hemoprotein reductase] + H2O + H(+). It participates in plant hormone degradation; abscisic acid degradation. In terms of biological role, involved in the oxidative degradation of abscisic acid. Plays an important role in determining abscisic acid levels in dry seeds and in the control of postgermination growth. This Arabidopsis thaliana (Mouse-ear cress) protein is Abscisic acid 8'-hydroxylase 1 (CYP707A1).